The primary structure comprises 901 residues: Probable inorganic carbon transporter subunit DabA (901 aa).

Residues cysteine 424, aspartate 426, histidine 606, and cysteine 621 each contribute to the Zn(2+) site.

This sequence belongs to the inorganic carbon transporter (TC 9.A.2) DabA family. As to quaternary structure, forms a complex with DabB. Requires Zn(2+) as cofactor.

It is found in the cell membrane. In terms of biological role, part of an energy-coupled inorganic carbon pump. The sequence is that of Probable inorganic carbon transporter subunit DabA from Staphylococcus aureus (strain MRSA252).